The sequence spans 264 residues: 3-methyl-2-oxobutanoate hydroxymethyltransferase (264 aa).

Mg(2+) contacts are provided by aspartate 45 and aspartate 84. 3-methyl-2-oxobutanoate-binding positions include 45-46 (DS), aspartate 84, and lysine 112. Residue glutamate 114 participates in Mg(2+) binding. Residue glutamate 181 is the Proton acceptor of the active site.

It belongs to the PanB family. As to quaternary structure, homodecamer; pentamer of dimers. The cofactor is Mg(2+).

Its subcellular location is the cytoplasm. It catalyses the reaction 3-methyl-2-oxobutanoate + (6R)-5,10-methylene-5,6,7,8-tetrahydrofolate + H2O = 2-dehydropantoate + (6S)-5,6,7,8-tetrahydrofolate. The protein operates within cofactor biosynthesis; (R)-pantothenate biosynthesis; (R)-pantoate from 3-methyl-2-oxobutanoate: step 1/2. Its function is as follows. Catalyzes the reversible reaction in which hydroxymethyl group from 5,10-methylenetetrahydrofolate is transferred onto alpha-ketoisovalerate to form ketopantoate. This Shigella dysenteriae serotype 1 (strain Sd197) protein is 3-methyl-2-oxobutanoate hydroxymethyltransferase.